The chain runs to 259 residues: Mediator of RNA polymerase II transcription subunit 7 (259 aa).

3 disordered regions span residues 1 to 52 (MAEP…EWSP), 99 to 118 (TQLY…SSQP), and 223 to 242 (GSTI…EDQI). The span at 31–44 (ENIKKEASKGEDGR) shows a compositional bias: basic and acidic residues. Residues 230–242 (TKDKKGVKPEDQI) show a composition bias toward basic and acidic residues.

Belongs to the Mediator complex subunit 7 family. As to quaternary structure, component of the Mediator complex.

Its subcellular location is the nucleus. Its function is as follows. Component of the Mediator complex, a coactivator involved in the regulated transcription of nearly all RNA polymerase II-dependent genes. Mediator functions as a bridge to convey information from gene-specific regulatory proteins to the basal RNA polymerase II transcription machinery. Mediator is recruited to promoters by direct interactions with regulatory proteins and serves as a scaffold for the assembly of a functional preinitiation complex with RNA polymerase II and the general transcription factors. This is Mediator of RNA polymerase II transcription subunit 7 (med7) from Emericella nidulans (strain FGSC A4 / ATCC 38163 / CBS 112.46 / NRRL 194 / M139) (Aspergillus nidulans).